We begin with the raw amino-acid sequence, 287 residues long: Ret finger protein-like 4A (287 aa).

An RING-type; degenerate zinc finger spans residues 11–53 (CPVCLKDLEEAVQLKCGYACCLQCLNSLQKEPDGEGLLCRFCS). Positions 78-276 (EPKLKSVLTM…LSICSVINPS (199 aa)) constitute a B30.2/SPRY domain.

Interacts with PSMB1, UBE2A and CCNB1.

The protein localises to the cytoplasm. It localises to the nucleus. This is Ret finger protein-like 4A (RFPL4A) from Homo sapiens (Human).